The primary structure comprises 114 residues: Pole-localizer protein TmaR (114 aa).

Residues 70 to 111 are a coiled coil; sequence RDDYESRVDDYTIRNAELSKQRREASTKMKEQKKAHAELLKN. The segment at 89-114 is disordered; that stretch reads KQRREASTKMKEQKKAHAELLKNAEK.

Belongs to the pole-localizer TmaR family.

It localises to the cytoplasm. Functionally, pole-localizer protein involved in the regulation of several cellular processes. This is Pole-localizer protein TmaR from Haemophilus influenzae (strain PittEE).